The chain runs to 144 residues: Large ribosomal subunit protein uL15 (144 aa).

A disordered region spans residues 1-53 (MRLNTLSPAEGSKHASKRPGRGIGSGLGKTGGRGHKGQKSRSGGGVRRGFEGG). Positions 21–31 (RGIGSGLGKTG) are enriched in gly residues.

Belongs to the universal ribosomal protein uL15 family. In terms of assembly, part of the 50S ribosomal subunit.

In terms of biological role, binds to the 23S rRNA. The protein is Large ribosomal subunit protein uL15 of Sodalis glossinidius (strain morsitans).